A 202-amino-acid chain; its full sequence is Apolipoprotein R (202 aa).

An N-terminal signal peptide occupies residues 1 to 28 (MPPNLQRIFPALCLLGVLFLLHCTPVLC). Sushi domains are found at residues 29–87 (GCDN…QCKA) and 88–145 (LCPK…KCEW). Intrachain disulfides connect C30–C73, C59–C85, C89–C130, and C116–C143.

Forms high molecular weight disulfide-linked complexes. In terms of tissue distribution, plasma. Found on very low-density lipoprotein (VLDL), on chylomicrons, and in the D &gt; 1.21 g/ml fraction of pig plasma. Found in liver, spleen, lung, bone marrow and lymph node.

The protein resides in the secreted. Its function is as follows. May be a lipoprotein-borne regulator of either the coagulation or the complement cascades. The sequence is that of Apolipoprotein R (APOR) from Sus scrofa (Pig).